We begin with the raw amino-acid sequence, 385 residues long: Transcription factor-like protein DPB (385 aa).

Disordered regions lie at residues 1–53 (MTTT…EQTI) and 71–102 (DIQG…KTGR). Polar residues predominate over residues 22 to 31 (PSTRSWGTAV). The span at 32 to 53 (SGQSVSTSGSMGSPSSRSEQTI) shows a compositional bias: low complexity. Residues 101–184 (GRGLRQFSMK…KKEIQWRGLP (84 aa)) mediate DNA binding. Residues 150-184 (DEKNIRRRVYDALNVLMAMDIISKDKKEIQWRGLP) carry the DEF box motif. Positions 185 to 234 (RTSLSDIEELKNERLSLRNRIEKKTAYSQELEEQYVGLQNLIQRNEHLYS) form a coiled coil. The interval 296–385 (PPQQPNGRNN…IMNSSMKPEN (90 aa)) is disordered. The segment covering 300–327 (PNGRNNSQLVCHNFTPENPNKGPSTGPT) has biased composition (polar residues). Low complexity predominate over residues 336 to 349 (HLQSQQHQQHSQLQ). Polar residues predominate over residues 355–364 (ETNNVTSSAD).

This sequence belongs to the E2F/DP family. As to quaternary structure, heterodimer with non-phosphorylated E2FC. No interaction with phosphorylated E2FC. Interacts preferentially with E2FC, but also with E2FA and E2FB. Interacts with SKP2A. Targeted for proteasomal degradation by the SCF(SKP2A) E3 ubiquitin ligase complex. Post-translationally, phosphorylated. Ubiquitous.

Its subcellular location is the nucleus. It localises to the cytoplasm. Functionally, involved in the regulation of the G1/S transition. Increases the DNA binding activity of E2F proteins after heterodimerization. The complex DPB/E2FC restricts cell division and lateral root initiation and may function as a negative regulator of E2F-regulated genes. The interaction with SKP2A is controlled by auxin. In Arabidopsis thaliana (Mouse-ear cress), this protein is Transcription factor-like protein DPB (DPB).